A 182-amino-acid polypeptide reads, in one-letter code: MSNQELKTTMSKSIEAAQRNFNTIRTGRANTSLLDRISVEYYGAETPLKSLATITTPDSQTIAIQPFDLGSLASIEKAIATSDLGFTPNNDGKIIRINVPPLTEERRKEFCKLASKYAEEGKVALRNIRREAIDRVKKSEKDGDLSEDQSRDEQETIQKETDNFIKDIEKKLSEKEAEILKV.

The disordered stretch occupies residues 136 to 160; it reads VKKSEKDGDLSEDQSRDEQETIQKE.

It belongs to the RRF family.

It localises to the cytoplasm. Functionally, responsible for the release of ribosomes from messenger RNA at the termination of protein biosynthesis. May increase the efficiency of translation by recycling ribosomes from one round of translation to another. This chain is Ribosome-recycling factor, found in Prochlorococcus marinus (strain NATL2A).